The chain runs to 266 residues: Hydroxyethylthiazole kinase (266 aa).

Methionine 41 provides a ligand contact to substrate. Positions 117 and 163 each coordinate ATP. Alanine 190 lines the substrate pocket.

Belongs to the Thz kinase family. The cofactor is Mg(2+).

It catalyses the reaction 5-(2-hydroxyethyl)-4-methylthiazole + ATP = 4-methyl-5-(2-phosphooxyethyl)-thiazole + ADP + H(+). It participates in cofactor biosynthesis; thiamine diphosphate biosynthesis; 4-methyl-5-(2-phosphoethyl)-thiazole from 5-(2-hydroxyethyl)-4-methylthiazole: step 1/1. Catalyzes the phosphorylation of the hydroxyl group of 4-methyl-5-beta-hydroxyethylthiazole (THZ). The protein is Hydroxyethylthiazole kinase of Histophilus somni (strain 129Pt) (Haemophilus somnus).